The primary structure comprises 146 residues: 3-dehydroquinate dehydratase (146 aa).

Y22 serves as the catalytic Proton acceptor. 3 residues coordinate substrate: N74, H80, and D87. H100 functions as the Proton donor in the catalytic mechanism. Substrate is bound by residues 101–102 (LS) and R111.

The protein belongs to the type-II 3-dehydroquinase family. As to quaternary structure, homododecamer.

It catalyses the reaction 3-dehydroquinate = 3-dehydroshikimate + H2O. It functions in the pathway metabolic intermediate biosynthesis; chorismate biosynthesis; chorismate from D-erythrose 4-phosphate and phosphoenolpyruvate: step 3/7. In terms of biological role, catalyzes a trans-dehydration via an enolate intermediate. This chain is 3-dehydroquinate dehydratase, found in Clostridium beijerinckii (strain ATCC 51743 / NCIMB 8052) (Clostridium acetobutylicum).